The following is a 469-amino-acid chain: Siroheme synthase (469 aa).

The interval 1–211 is precorrin-2 dehydrogenase /sirohydrochlorin ferrochelatase; it reads MSTQLQTWDF…GRTDKARAML (211 aa). NAD(+)-binding positions include 29 to 30 and 50 to 51; these read EQ and DP. The residue at position 136 (S136) is a Phosphoserine. Residues 227–469 form a uroporphyrinogen-III C-methyltransferase region; the sequence is GEVYLVGAGP…TLRDRLRWMD (243 aa). Residue P236 participates in S-adenosyl-L-methionine binding. D259 (proton acceptor) is an active-site residue. K281 serves as the catalytic Proton donor. S-adenosyl-L-methionine-binding positions include 312–314, I317, 342–343, M394, and G423; these read GGD and TA.

The protein in the N-terminal section; belongs to the precorrin-2 dehydrogenase / sirohydrochlorin ferrochelatase family. It in the C-terminal section; belongs to the precorrin methyltransferase family.

The catalysed reaction is uroporphyrinogen III + 2 S-adenosyl-L-methionine = precorrin-2 + 2 S-adenosyl-L-homocysteine + H(+). It carries out the reaction precorrin-2 + NAD(+) = sirohydrochlorin + NADH + 2 H(+). It catalyses the reaction siroheme + 2 H(+) = sirohydrochlorin + Fe(2+). The protein operates within cofactor biosynthesis; adenosylcobalamin biosynthesis; precorrin-2 from uroporphyrinogen III: step 1/1. It participates in cofactor biosynthesis; adenosylcobalamin biosynthesis; sirohydrochlorin from precorrin-2: step 1/1. It functions in the pathway porphyrin-containing compound metabolism; siroheme biosynthesis; precorrin-2 from uroporphyrinogen III: step 1/1. Its pathway is porphyrin-containing compound metabolism; siroheme biosynthesis; siroheme from sirohydrochlorin: step 1/1. The protein operates within porphyrin-containing compound metabolism; siroheme biosynthesis; sirohydrochlorin from precorrin-2: step 1/1. Its function is as follows. Multifunctional enzyme that catalyzes the SAM-dependent methylations of uroporphyrinogen III at position C-2 and C-7 to form precorrin-2 via precorrin-1. Then it catalyzes the NAD-dependent ring dehydrogenation of precorrin-2 to yield sirohydrochlorin. Finally, it catalyzes the ferrochelation of sirohydrochlorin to yield siroheme. The protein is Siroheme synthase of Hahella chejuensis (strain KCTC 2396).